Reading from the N-terminus, the 351-residue chain is Hepatocyte nuclear factor 3-gamma (351 aa).

Residues 52-73 show a composition bias toward pro residues; it reads PGGLPASPLPTGPLAPPAPTAP. The segment at 52–94 is disordered; the sequence is PGGLPASPLPTGPLAPPAPTAPLGPTFPGLGASTGGGSSSGYG. Gly residues predominate over residues 83–94; sequence ASTGGGSSSGYG. Positions 118–212 form a DNA-binding region, fork-head; that stretch reads KPPYSYISLI…ENGCYLRRQK (95 aa). The disordered stretch occupies residues 218–275; it reads EKVKKGGGGSSASRNSAGSASTATAPAATVASTPQPQPPPPEPEAQGGDEVGALDCGS. A compositionally biased stretch (low complexity) spans 228 to 251; that stretch reads SASRNSAGSASTATAPAATVASTP.

It localises to the nucleus. Transcription activator for a number of liver genes such as AFP, albumin, tyrosine aminotransferase, PEPCK, etc. Interacts with the cis-acting regulatory regions of these genes. The sequence is that of Hepatocyte nuclear factor 3-gamma (FOXA3) from Bos taurus (Bovine).